The sequence spans 124 residues: Small ribosomal subunit protein uS12 (124 aa).

The interval 1-25 (MPTFNQLVRNGRKPPRWKTSSPALE) is disordered. The residue at position 89 (D89) is a 3-methylthioaspartic acid. The segment at 104 to 124 (TAGVANRKQSRSKYGAKRPKS) is disordered. A compositionally biased stretch (basic residues) spans 111-124 (KQSRSKYGAKRPKS).

The protein belongs to the universal ribosomal protein uS12 family. In terms of assembly, part of the 30S ribosomal subunit. Contacts proteins S8 and S17. May interact with IF1 in the 30S initiation complex.

With S4 and S5 plays an important role in translational accuracy. In terms of biological role, interacts with and stabilizes bases of the 16S rRNA that are involved in tRNA selection in the A site and with the mRNA backbone. Located at the interface of the 30S and 50S subunits, it traverses the body of the 30S subunit contacting proteins on the other side and probably holding the rRNA structure together. The combined cluster of proteins S8, S12 and S17 appears to hold together the shoulder and platform of the 30S subunit. The polypeptide is Small ribosomal subunit protein uS12 (Solibacter usitatus (strain Ellin6076)).